A 633-amino-acid polypeptide reads, in one-letter code: Guanylate-binding protein 6 (633 aa).

The segment at 1–310 is GTPase domain (Globular); sequence MESGPKMLAP…EAVNSGAVPC (310 aa). The GB1/RHD3-type G domain maps to 35 to 277; it reads SQPVVVVAIV…FSSYIFTHAR (243 aa). Residues 45–52, 67–69, and 97–101 contribute to the GTP site; these read GLYRTGKS, LGS, and DTEGL.

Belongs to the TRAFAC class dynamin-like GTPase superfamily. GB1/RHD3 GTPase family. GB1 subfamily.

Its subcellular location is the cytoplasmic vesicle. It catalyses the reaction GTP + H2O = GDP + phosphate + H(+). Interferon (IFN)-inducible GTPase that plays important roles in innate immunity against a diverse range of bacterial, viral and protozoan pathogens, such as bacterial pathogens Listeria monocytogenes and Mycobacterium bovis BCG as well as the protozoan pathogen Toxoplasma gondii. Confers protection to several pathogens, including the bacterial pathogens Listeria monocytogenes and Mycobacterium bovis BCG as well as the protozoan pathogen Toxoplasma gondii. The polypeptide is Guanylate-binding protein 6 (GBP6) (Pongo abelii (Sumatran orangutan)).